We begin with the raw amino-acid sequence, 513 residues long: ATP synthase subunit alpha (513 aa).

Residue 169–176 participates in ATP binding; it reads GDRQIGKT.

Belongs to the ATPase alpha/beta chains family. F-type ATPases have 2 components, CF(1) - the catalytic core - and CF(0) - the membrane proton channel. CF(1) has five subunits: alpha(3), beta(3), gamma(1), delta(1), epsilon(1). CF(0) has three main subunits: a(1), b(2) and c(9-12). The alpha and beta chains form an alternating ring which encloses part of the gamma chain. CF(1) is attached to CF(0) by a central stalk formed by the gamma and epsilon chains, while a peripheral stalk is formed by the delta and b chains.

The protein resides in the cell inner membrane. The enzyme catalyses ATP + H2O + 4 H(+)(in) = ADP + phosphate + 5 H(+)(out). Its function is as follows. Produces ATP from ADP in the presence of a proton gradient across the membrane. The alpha chain is a regulatory subunit. This chain is ATP synthase subunit alpha, found in Francisella tularensis subsp. mediasiatica (strain FSC147).